A 159-amino-acid polypeptide reads, in one-letter code: Protein Smg homolog (159 aa).

This sequence belongs to the Smg family.

In Vibrio vulnificus (strain CMCP6), this protein is Protein Smg homolog.